A 233-amino-acid polypeptide reads, in one-letter code: Orotate phosphoribosyltransferase (233 aa).

Lysine 29 provides a ligand contact to 5-phospho-alpha-D-ribose 1-diphosphate. Residue 37–38 (FF) coordinates orotate. Residues 79–80 (YK), arginine 109, lysine 110, lysine 113, histidine 115, and 135–143 (DDVITAGTA) contribute to the 5-phospho-alpha-D-ribose 1-diphosphate site. The orotate site is built by threonine 139 and arginine 167.

This sequence belongs to the purine/pyrimidine phosphoribosyltransferase family. PyrE subfamily. Homodimer.

It catalyses the reaction orotidine 5'-phosphate + diphosphate = orotate + 5-phospho-alpha-D-ribose 1-diphosphate. Its pathway is pyrimidine metabolism; UMP biosynthesis via de novo pathway; UMP from orotate: step 1/2. Catalyzes the transfer of a ribosyl phosphate group from 5-phosphoribose 1-diphosphate to orotate, leading to the formation of orotidine monophosphate (OMP). The polypeptide is Orotate phosphoribosyltransferase (ura-5) (Neurospora crassa (strain ATCC 24698 / 74-OR23-1A / CBS 708.71 / DSM 1257 / FGSC 987)).